Reading from the N-terminus, the 71-residue chain is Dermonecrotic toxin LgSicTox-alphaI-Loxn-A (71 aa).

Residue histidine 12 is part of the active site. Positions 32, 34, and 48 each coordinate Mg(2+).

The cofactor is Mg(2+). In terms of processing, contains 2 disulfide bonds. In terms of tissue distribution, expressed by the venom gland.

The protein resides in the secreted. It catalyses the reaction an N-(acyl)-sphingosylphosphocholine = an N-(acyl)-sphingosyl-1,3-cyclic phosphate + choline. The enzyme catalyses an N-(acyl)-sphingosylphosphoethanolamine = an N-(acyl)-sphingosyl-1,3-cyclic phosphate + ethanolamine. The catalysed reaction is a 1-acyl-sn-glycero-3-phosphocholine = a 1-acyl-sn-glycero-2,3-cyclic phosphate + choline. It carries out the reaction a 1-acyl-sn-glycero-3-phosphoethanolamine = a 1-acyl-sn-glycero-2,3-cyclic phosphate + ethanolamine. In terms of biological role, catalyzes the hydrolysis of sphingomyelin. May also act on other phosphatidyl esters. Dermonecrotic toxins cleave the phosphodiester linkage between the phosphate and headgroup of certain phospholipids (sphingolipid and lysolipid substrates), forming an alcohol (often choline) and a cyclic phosphate. This toxin acts on sphingomyelin (SM). It may also act on ceramide phosphoethanolamine (CPE), lysophosphatidylcholine (LPC) and lysophosphatidylethanolamine (LPE), but not on lysophosphatidylserine (LPS), and lysophosphatidylglycerol (LPG). It acts by transphosphatidylation, releasing exclusively cyclic phosphate products as second products. In vivo, induces dermonecrosis, but is not lethal. Induces hemolysis, vascular permeability, edema, inflammatory response, and platelet aggregation. This is Dermonecrotic toxin LgSicTox-alphaI-Loxn-A from Loxosceles gaucho (Spider).